The primary structure comprises 447 residues: Elongation factor 1-alpha (447 aa).

Residues 5-230 (KIHISIVVIG…DQINEPKRPS (226 aa)) enclose the tr-type G domain. The interval 14-21 (GHVDSGKS) is G1. A GTP-binding site is contributed by 14–21 (GHVDSGKS). At lysine 55 the chain carries N6,N6-dimethyllysine. The tract at residues 70–74 (GITID) is G2. Lysine 79 carries the post-translational modification N6,N6,N6-trimethyllysine. A G3 region spans residues 91 to 94 (DAPG). Residues 91 to 95 (DAPGH) and 153 to 156 (NKMD) contribute to the GTP site. The interval 153–156 (NKMD) is G4. At lysine 187 the chain carries N6,N6,N6-trimethyllysine. A G5 region spans residues 194 to 196 (SGF). Lysine 261 carries the N6-methyllysine modification. A 5-glutamyl glycerylphosphorylethanolamine modification is found at glutamate 289. Position 306 is an N6,N6,N6-trimethyllysine (lysine 306). At glutamate 362 the chain carries 5-glutamyl glycerylphosphorylethanolamine. Lysine 396 is subject to N6,N6,N6-trimethyllysine.

The protein belongs to the TRAFAC class translation factor GTPase superfamily. Classic translation factor GTPase family. EF-Tu/EF-1A subfamily.

It localises to the cytoplasm. Functionally, this protein promotes the GTP-dependent binding of aminoacyl-tRNA to the A-site of ribosomes during protein biosynthesis. The protein is Elongation factor 1-alpha of Hordeum vulgare (Barley).